The following is a 332-amino-acid chain: Tetraacyldisaccharide 4'-kinase (332 aa).

52-59 (TLGGAGKT) serves as a coordination point for ATP.

Belongs to the LpxK family.

It carries out the reaction a lipid A disaccharide + ATP = a lipid IVA + ADP + H(+). It participates in glycolipid biosynthesis; lipid IV(A) biosynthesis; lipid IV(A) from (3R)-3-hydroxytetradecanoyl-[acyl-carrier-protein] and UDP-N-acetyl-alpha-D-glucosamine: step 6/6. In terms of biological role, transfers the gamma-phosphate of ATP to the 4'-position of a tetraacyldisaccharide 1-phosphate intermediate (termed DS-1-P) to form tetraacyldisaccharide 1,4'-bis-phosphate (lipid IVA). The protein is Tetraacyldisaccharide 4'-kinase of Methylobacterium sp. (strain 4-46).